The chain runs to 337 residues: Cytoskeleton protein RodZ (337 aa).

The Cytoplasmic portion of the chain corresponds to 1-111 (MNTEATHDQN…LGKRRKKRDG (111 aa)). One can recognise an HTH cro/C1-type domain in the interval 19–71 (LRNAREQLGLSQQAVAERLCLKVSTVRDIEEDKAPADLASTFLRGYIRSYARL). The segment at residues 30–49 (QQAVAERLCLKVSTVRDIEE) is a DNA-binding region (H-T-H motif). Residues 112–132 (WLMTFTWLVLFVVIGLSGAWW) form a helical; Signal-anchor for type II membrane protein membrane-spanning segment. The Periplasmic portion of the chain corresponds to 133–337 (WQDHKAQQEE…TLNAEQSPAQ (205 aa)). Over residues 145–167 (TMADQSSAELSSNSEQGQSVPLN) the composition is skewed to polar residues. The tract at residues 145–218 (TMADQSSAEL…AVVSPSQANV (74 aa)) is disordered. Residues 168 to 207 (TSTTTDPATTSTPPASVDTTATNTQTPAVTAPAPAVDPQQ) show a composition bias toward low complexity. Residues 208–218 (NAVVSPSQANV) show a composition bias toward polar residues.

This sequence belongs to the RodZ family.

Its subcellular location is the cell inner membrane. In terms of biological role, cytoskeletal protein that is involved in cell-shape control through regulation of the length of the long axis. This is Cytoskeleton protein RodZ from Shigella dysenteriae serotype 1 (strain Sd197).